The primary structure comprises 431 residues: UDP-N-acetylmuramate--L-alanine ligase (431 aa).

An ATP-binding site is contributed by 108 to 114 (GAHGKST).

Belongs to the MurCDEF family.

Its subcellular location is the cytoplasm. The enzyme catalyses UDP-N-acetyl-alpha-D-muramate + L-alanine + ATP = UDP-N-acetyl-alpha-D-muramoyl-L-alanine + ADP + phosphate + H(+). Its pathway is cell wall biogenesis; peptidoglycan biosynthesis. In terms of biological role, cell wall formation. The chain is UDP-N-acetylmuramate--L-alanine ligase from Campylobacter jejuni subsp. jejuni serotype O:6 (strain 81116 / NCTC 11828).